Reading from the N-terminus, the 125-residue chain is RutC family protein aq_364 (125 aa).

It belongs to the RutC family.

This chain is RutC family protein aq_364, found in Aquifex aeolicus (strain VF5).